A 289-amino-acid chain; its full sequence is Eukaryotic translation initiation factor 3 subunit G (289 aa).

Disordered stretches follow at residues 1–31 and 151–199; these read MSRLANSAGDWADDEEFDEAASLPPQQVISN and DTMA…GEKM. Residues 209–287 enclose the RRM domain; sequence ATLRVTNVSE…LILRVEFAKK (79 aa).

It belongs to the eIF-3 subunit G family. Component of the eukaryotic translation initiation factor 3 (eIF-3) complex.

It is found in the cytoplasm. RNA-binding component of the eukaryotic translation initiation factor 3 (eIF-3) complex, which is involved in protein synthesis of a specialized repertoire of mRNAs and, together with other initiation factors, stimulates binding of mRNA and methionyl-tRNAi to the 40S ribosome. The eIF-3 complex specifically targets and initiates translation of a subset of mRNAs involved in cell proliferation. This subunit can bind 18S rRNA. The sequence is that of Eukaryotic translation initiation factor 3 subunit G from Coccidioides immitis (strain RS) (Valley fever fungus).